The chain runs to 609 residues: Protein kinase PVPK-1 (609 aa).

Residues 1–19 (MESSVNGVDSLSEVQNSVS) are compositionally biased toward polar residues. 2 disordered regions span residues 1 to 51 (MESS…GHQT) and 80 to 100 (PTKLSSKQPPLDDSKGCEPNG). Positions 229–565 (FRLLKKLGCG…ATEIKQHPFF (337 aa)) constitute a Protein kinase domain. ATP contacts are provided by residues 235-243 (LGCGDIGSV) and Lys258. Asp354 functions as the Proton acceptor in the catalytic mechanism. Residues 429–448 (GKSKKDKKSKPKNDMHNQVT) are disordered.

This sequence belongs to the protein kinase superfamily. Ser/Thr protein kinase family.

The catalysed reaction is L-seryl-[protein] + ATP = O-phospho-L-seryl-[protein] + ADP + H(+). The enzyme catalyses L-threonyl-[protein] + ATP = O-phospho-L-threonyl-[protein] + ADP + H(+). In Phaseolus vulgaris (Kidney bean), this protein is Protein kinase PVPK-1.